The chain runs to 341 residues: Heme A synthase (341 aa).

The next 8 helical transmembrane spans lie at 7 to 27 (VTVW…IGGI), 92 to 112 (LFGR…AITK), 118 to 138 (MVAK…MGWF), 159 to 179 (LFLT…CAGV), 190 to 210 (FFTA…GALV), 253 to 273 (FLHR…PFWL), 280 to 300 (LFLA…VSVV), and 302 to 322 (IFLA…GVHM). His-255 provides a ligand contact to heme. Position 308 (His-308) interacts with heme.

The protein belongs to the COX15/CtaA family. Type 2 subfamily. In terms of assembly, interacts with CtaB. Heme b serves as cofactor.

The protein localises to the cell membrane. It catalyses the reaction Fe(II)-heme o + 2 A + H2O = Fe(II)-heme a + 2 AH2. The protein operates within porphyrin-containing compound metabolism; heme A biosynthesis; heme A from heme O: step 1/1. In terms of biological role, catalyzes the conversion of heme O to heme A by two successive hydroxylations of the methyl group at C8. The first hydroxylation forms heme I, the second hydroxylation results in an unstable dihydroxymethyl group, which spontaneously dehydrates, resulting in the formyl group of heme A. This chain is Heme A synthase, found in Anaplasma marginale (strain St. Maries).